Here is a 288-residue protein sequence, read N- to C-terminus: MAEITAALVKELRERTGEGMMDCKKALTKAGGDIEKAIDDMRASGAIKAAKKAGNVAAEGAIAIKDDGKAAVLLEVNSQTDFLALQDDFKAFVAASVEKAFADKLTDAAPLIEAQEAARLILVGKTGENVNIRRLARVEGDVVGTYLHGNKIGVAVVLKGGSVELAKDIAMHVAASNPEFLLPSQVSAEAIEREKAVFLQLNEDKMKGKPAEIVEKMIAGRISKFLAEASLVEQAFVKDPEITVGALAKKGGAEIVSFTRFAVGEGIEKKEDNFAEEVAAQLAAAKQQ.

The tract at residues 80–83 (TDFL) is involved in Mg(2+) ion dislocation from EF-Tu.

It belongs to the EF-Ts family.

It localises to the cytoplasm. Functionally, associates with the EF-Tu.GDP complex and induces the exchange of GDP to GTP. It remains bound to the aminoacyl-tRNA.EF-Tu.GTP complex up to the GTP hydrolysis stage on the ribosome. This chain is Elongation factor Ts, found in Pseudomonas fluorescens (strain ATCC BAA-477 / NRRL B-23932 / Pf-5).